Consider the following 515-residue polypeptide: Maturase K (515 aa).

The protein belongs to the intron maturase 2 family. MatK subfamily.

The protein resides in the plastid. It localises to the chloroplast. Its function is as follows. Usually encoded in the trnK tRNA gene intron. Probably assists in splicing its own and other chloroplast group II introns. The polypeptide is Maturase K (Pinus contorta (Shore pine)).